The chain runs to 1099 residues: Solute carrier family 12 member 1 (1099 aa).

Topologically, residues 1–177 (MSLNNSSSVF…EDNKAGAVKF (177 aa)) are cytoplasmic. An RFXV motif motif is present at residues 20–23 (RFQV). Ser60 and Ser90 each carry phosphoserine. Phosphothreonine occurs at positions 94, 99, 104, and 117. Phosphoserine is present on Ser119. Position 129 is a phosphoserine; by AMPK (Ser129). Ser147 is subject to Phosphoserine. Residues 147-169 (SADRVANGEGMPGEEHAENKEED) form a disordered region. Positions 159–169 (GEEHAENKEED) are enriched in basic and acidic residues. A helical transmembrane segment spans residues 178–198 (GWVKGVLVRCMLNIWGVMLFI). Over 199 to 201 (RLS) the chain is Extracellular. Residues 202–222 (WIVGEAGIGLGVVIILLSTMV) traverse the membrane as a helical segment. Residues 223 to 259 (TSITGLSTSAIATNGFVRGGGAYYLISRSLGPEFGGS) are Cytoplasmic-facing. The chain crosses the membrane as a helical span at residues 260–280 (IGLIFAFANAVAVAMYVVGFA). Residues 281 to 302 (ETVVDLLKESDSMMVDPTNDIR) lie on the Extracellular side of the membrane. Residues 303-323 (IIGSITVVILLGISVAGMEWE) form a helical membrane-spanning segment. Over 324–327 (AKAQ) the chain is Cytoplasmic. The helical transmembrane segment at 328-348 (VILLIILLIAIANFFIGTVIP) threads the bilayer. Over 349–379 (SNNEKKSRGFFNYQASIFAENFGPSFTKGEG) the chain is Extracellular. The helical transmembrane segment at 380–400 (FFSVFAIFFPAATGILAGANI) threads the bilayer. Residues 401–417 (SGDLEDPQDAIPRGTML) are Cytoplasmic-facing. Residues 418–438 (AIFITTVAYIGVAICVGACVV) form a helical membrane-spanning segment. Residues 439–550 (RDATGSMNDT…NNEPLRGYIL (112 aa)) are Extracellular-facing. Asn446 and Asn456 each carry an N-linked (GlcNAc...) asparagine glycan. Helical transmembrane passes span 551–571 (TFVI…APII) and 572–592 (SNFF…ASYA). The Extracellular segment spans residues 593–609 (KSPGWRPAYGIYNMWVS). A helical membrane pass occupies residues 610–630 (LFGAVLCCAVMFVINWWAAVI). Over 631–1099 (TYVIEFFLYI…NHKNVLTFYS (469 aa)) the chain is Cytoplasmic.

It belongs to the SLC12A transporter family. When phosphorylated, interacts with PPP3CB. Post-translationally, phosphorylated at Ser-90, Thr-99 and Thr-104 by OXSR1/OSR1 and STK39/SPAK downstream of WNK kinases (WNK1, WNK2, WNK3 or WNK4), promoting its activity. In terms of tissue distribution, predominant in kidney. The 3 isoforms are differentially distributed within the kidney: B almost exclusively in cortex, F almost exclusively in medulla, and A about equally distributed.

It is found in the apical cell membrane. It carries out the reaction K(+)(out) + 2 chloride(out) + Na(+)(out) = K(+)(in) + 2 chloride(in) + Na(+)(in). With respect to regulation, activated following phosphorylation by OXSR1/OSR1 and STK39/SPAK downstream of WNK kinases (WNK1, WNK2, WNK3 or WNK4). Functionally, renal sodium, potassium and chloride ion cotransporter that mediates the transepithelial NaCl reabsorption in the thick ascending limb and plays an essential role in the urinary concentration and volume regulation. Electrically silent transporter system. This chain is Solute carrier family 12 member 1 (SLC12A1), found in Oryctolagus cuniculus (Rabbit).